A 280-amino-acid chain; its full sequence is F420-dependent methylenetetrahydromethanopterin dehydrogenase (280 aa).

It belongs to the MTD family.

The catalysed reaction is 5,10-methylenetetrahydromethanopterin + oxidized coenzyme F420-(gamma-L-Glu)(n) + 2 H(+) = 5,10-methenyl-5,6,7,8-tetrahydromethanopterin + reduced coenzyme F420-(gamma-L-Glu)(n). It functions in the pathway one-carbon metabolism; methanogenesis from CO(2); 5,10-methylene-5,6,7,8-tetrahydromethanopterin from 5,10-methenyl-5,6,7,8-tetrahydromethanopterin (coenzyme F420 route): step 1/1. Functionally, catalyzes the reversible reduction of methenyl-H(4)MPT(+) to methylene-H(4)MPT. This chain is F420-dependent methylenetetrahydromethanopterin dehydrogenase, found in Methanoculleus marisnigri (strain ATCC 35101 / DSM 1498 / JR1).